A 308-amino-acid chain; its full sequence is Uricase-2 (308 aa).

Residues Lys17 and Thr63 each act as charge relay system in the active site. Thr63, Asp64, Phe165, Arg182, Val237, Gln238, and Asn264 together coordinate urate. The active-site Charge relay system is His266. The Microbody targeting signal signature appears at Ser306–Leu308.

The protein belongs to the uricase family. Homotetramer. Expressed predominantly in the uninfected cells of the central tissue of the root nodule. Also expressed in the nodule parenchyma cells and vascular tissue, in the roots, stems and leaves of uninfected adult plants, and in the cotyledons, roots and hypocotyls of developing seedlings. Localized to the metaxylem parenchyma cells and phloem fibers of developing roots.

The protein localises to the peroxisome. The enzyme catalyses urate + O2 + H2O = 5-hydroxyisourate + H2O2. It functions in the pathway purine metabolism; urate degradation; (S)-allantoin from urate: step 1/3. Catalyzes the oxidation of uric acid to 5-hydroxyisourate, which is further processed to form (S)-allantoin. The protein is Uricase-2 (URIII) of Phaseolus vulgaris (Kidney bean).